Here is a 248-residue protein sequence, read N- to C-terminus: 3-deoxy-manno-octulosonate cytidylyltransferase (248 aa).

It belongs to the KdsB family.

It localises to the cytoplasm. The enzyme catalyses 3-deoxy-alpha-D-manno-oct-2-ulosonate + CTP = CMP-3-deoxy-beta-D-manno-octulosonate + diphosphate. Its pathway is nucleotide-sugar biosynthesis; CMP-3-deoxy-D-manno-octulosonate biosynthesis; CMP-3-deoxy-D-manno-octulosonate from 3-deoxy-D-manno-octulosonate and CTP: step 1/1. It functions in the pathway bacterial outer membrane biogenesis; lipopolysaccharide biosynthesis. In terms of biological role, activates KDO (a required 8-carbon sugar) for incorporation into bacterial lipopolysaccharide in Gram-negative bacteria. This Escherichia coli O139:H28 (strain E24377A / ETEC) protein is 3-deoxy-manno-octulosonate cytidylyltransferase.